Consider the following 417-residue polypeptide: NADH-quinone oxidoreductase subunit D (417 aa).

The protein belongs to the complex I 49 kDa subunit family. In terms of assembly, NDH-1 is composed of 14 different subunits. Subunits NuoB, C, D, E, F, and G constitute the peripheral sector of the complex.

The protein localises to the cell inner membrane. It catalyses the reaction a quinone + NADH + 5 H(+)(in) = a quinol + NAD(+) + 4 H(+)(out). Its function is as follows. NDH-1 shuttles electrons from NADH, via FMN and iron-sulfur (Fe-S) centers, to quinones in the respiratory chain. The immediate electron acceptor for the enzyme in this species is believed to be ubiquinone. Couples the redox reaction to proton translocation (for every two electrons transferred, four hydrogen ions are translocated across the cytoplasmic membrane), and thus conserves the redox energy in a proton gradient. The protein is NADH-quinone oxidoreductase subunit D of Legionella pneumophila (strain Corby).